Here is an 89-residue protein sequence, read N- to C-terminus: Cell division topological specificity factor (89 aa).

The protein belongs to the MinE family.

Functionally, prevents the cell division inhibition by proteins MinC and MinD at internal division sites while permitting inhibition at polar sites. This ensures cell division at the proper site by restricting the formation of a division septum at the midpoint of the long axis of the cell. This chain is Cell division topological specificity factor, found in Yersinia pestis bv. Antiqua (strain Angola).